The chain runs to 157 residues: Pyruvoyl-dependent arginine decarboxylase 2 (157 aa).

Ser-43 bears the Pyruvic acid (Ser) mark.

Belongs to the PdaD family. The cofactor is pyruvate.

The catalysed reaction is L-arginine + H(+) = agmatine + CO2. The chain is Pyruvoyl-dependent arginine decarboxylase 2 (pdaD2) from Archaeoglobus fulgidus (strain ATCC 49558 / DSM 4304 / JCM 9628 / NBRC 100126 / VC-16).